The chain runs to 120 residues: MTNFIPSLTDWHALHALSITMLDLAHSGKWDELIEQEMNYVQLVEGIARNPISPGNTFLINQAKEILNAVLRNEAELKTLLQHRMEELRQLIDQTGKQQSVSTTYGNLAGNILFPSNLNQ.

The required for homodimerization stretch occupies residues 1 to 50 (MTNFIPSLTDWHALHALSITMLDLAHSGKWDELIEQEMNYVQLVEGIARN). The tract at residues 59–97 (LINQAKEILNAVLRNEAELKTLLQHRMEELRQLIDQTGK) is fliD binding.

Belongs to the FliT family. In terms of assembly, homodimer. Interacts with FliD and FlhC.

Its subcellular location is the cytoplasm. It is found in the cytosol. In terms of biological role, dual-function protein that regulates the transcription of class 2 flagellar operons and that also acts as an export chaperone for the filament-capping protein FliD. As a transcriptional regulator, acts as an anti-FlhDC factor; it directly binds FlhC, thus inhibiting the binding of the FlhC/FlhD complex to class 2 promoters, resulting in decreased expression of class 2 flagellar operons. As a chaperone, effects FliD transition to the membrane by preventing its premature polymerization, and by directing it to the export apparatus. The polypeptide is Flagellar protein FliT (Citrobacter koseri (strain ATCC BAA-895 / CDC 4225-83 / SGSC4696)).